We begin with the raw amino-acid sequence, 484 residues long: Chromosomal replication initiator protein DnaA (484 aa).

The interval 1 to 83 (MQPPSQDWAS…LAWRTVWPGI (83 aa)) is domain I, interacts with DnaA modulators. Residues 83-146 (IAEVKVSVRN…EKKAEGEDQN (64 aa)) form a domain II region. The disordered stretch occupies residues 110–146 (GDQPRPLPKKPAKKKQSVPATPKSTSPEKKAEGEDQN). The span at 116–125 (LPKKPAKKKQ) shows a compositional bias: basic residues. Residues 135-146 (SPEKKAEGEDQN) are compositionally biased toward basic and acidic residues. The tract at residues 147 to 364 (QFEERYNFDN…GALNRVVAYA (218 aa)) is domain III, AAA+ region. ATP-binding residues include Gly-191, Gly-193, Lys-194, and Thr-195. Positions 365–484 (TLSNRPINMD…VRLLMRQFEG (120 aa)) are domain IV, binds dsDNA.

It belongs to the DnaA family. Oligomerizes as a right-handed, spiral filament on DNA at oriC.

It localises to the cytoplasm. In terms of biological role, plays an essential role in the initiation and regulation of chromosomal replication. ATP-DnaA binds to the origin of replication (oriC) to initiate formation of the DNA replication initiation complex once per cell cycle. Binds the DnaA box (a 9 base pair repeat at the origin) and separates the double-stranded (ds)DNA. Forms a right-handed helical filament on oriC DNA; dsDNA binds to the exterior of the filament while single-stranded (ss)DNA is stabiized in the filament's interior. The ATP-DnaA-oriC complex binds and stabilizes one strand of the AT-rich DNA unwinding element (DUE), permitting loading of DNA polymerase. After initiation quickly degrades to an ADP-DnaA complex that is not apt for DNA replication. Binds acidic phospholipids. The polypeptide is Chromosomal replication initiator protein DnaA (Zymomonas mobilis subsp. mobilis (strain ATCC 31821 / ZM4 / CP4)).